Consider the following 485-residue polypeptide: Hexokinase (485 aa).

Residue S15 is modified to Phosphoserine. Residues 21 to 468 form the Hexokinase domain; sequence ANLMEQIHGL…SGVGAAIIAC (448 aa). A hexokinase small subdomain region spans residues 75 to 208; sequence TGKETGDFLA…NIPINVVALI (134 aa). K111 contacts ATP. The interval 151–177 is glucose-binding; it reads PLGFTFSYPASQKKINSGVLQRWTKGF. Positions 209-457 are hexokinase large subdomain; it reads NDTTGTLVAS…HPIQLVAAED (249 aa).

As to quaternary structure, monomer and homodimer. The monomeric form is active, the homodimeric form inactive.

It catalyses the reaction a D-hexose + ATP = a D-hexose 6-phosphate + ADP + H(+). The catalysed reaction is D-fructose + ATP = D-fructose 6-phosphate + ADP + H(+). The enzyme catalyses D-glucose + ATP = D-glucose 6-phosphate + ADP + H(+). It participates in carbohydrate metabolism; hexose metabolism. It functions in the pathway carbohydrate degradation; glycolysis; D-glyceraldehyde 3-phosphate and glycerone phosphate from D-glucose: step 1/4. Functionally, catalyzes the phosphorylation of hexose, such as D-glucose and D-fructose, to hexose 6-phosphate (D-glucose 6-phosphate and D-fructose 6-phosphate, respectively). Has higher affinity for D-glucose. Mediates the initial step of glycolysis by catalyzing phosphorylation of D-glucose to D-glucose 6-phosphate. In Kluyveromyces lactis (strain ATCC 8585 / CBS 2359 / DSM 70799 / NBRC 1267 / NRRL Y-1140 / WM37) (Yeast), this protein is Hexokinase (RAG5).